Consider the following 298-residue polypeptide: Acetylglutamate kinase (298 aa).

Substrate-binding positions include 69-70 (GG), R91, and N191.

Belongs to the acetylglutamate kinase family. ArgB subfamily.

The protein resides in the cytoplasm. It carries out the reaction N-acetyl-L-glutamate + ATP = N-acetyl-L-glutamyl 5-phosphate + ADP. It participates in amino-acid biosynthesis; L-arginine biosynthesis; N(2)-acetyl-L-ornithine from L-glutamate: step 2/4. Its function is as follows. Catalyzes the ATP-dependent phosphorylation of N-acetyl-L-glutamate. This chain is Acetylglutamate kinase, found in Neisseria meningitidis serogroup C / serotype 2a (strain ATCC 700532 / DSM 15464 / FAM18).